We begin with the raw amino-acid sequence, 89 residues long: Small ribosomal subunit protein uS15 (89 aa).

It belongs to the universal ribosomal protein uS15 family. In terms of assembly, part of the 30S ribosomal subunit. Forms a bridge to the 50S subunit in the 70S ribosome, contacting the 23S rRNA.

Its function is as follows. One of the primary rRNA binding proteins, it binds directly to 16S rRNA where it helps nucleate assembly of the platform of the 30S subunit by binding and bridging several RNA helices of the 16S rRNA. In terms of biological role, forms an intersubunit bridge (bridge B4) with the 23S rRNA of the 50S subunit in the ribosome. This is Small ribosomal subunit protein uS15 from Azobacteroides pseudotrichonymphae genomovar. CFP2.